The chain runs to 216 residues: Protein-L-isoaspartate O-methyltransferase (216 aa).

S61 is a catalytic residue.

It belongs to the methyltransferase superfamily. L-isoaspartyl/D-aspartyl protein methyltransferase family.

The protein localises to the cytoplasm. The enzyme catalyses [protein]-L-isoaspartate + S-adenosyl-L-methionine = [protein]-L-isoaspartate alpha-methyl ester + S-adenosyl-L-homocysteine. In terms of biological role, catalyzes the methyl esterification of L-isoaspartyl residues in peptides and proteins that result from spontaneous decomposition of normal L-aspartyl and L-asparaginyl residues. It plays a role in the repair and/or degradation of damaged proteins. The protein is Protein-L-isoaspartate O-methyltransferase of Geobacter metallireducens (strain ATCC 53774 / DSM 7210 / GS-15).